Here is a 269-residue protein sequence, read N- to C-terminus: MTVEQREASRLGPLFDSCRAENRAALIGYLPTGYPDVNTSVRAMTELVESGCDIVEVGVPYSDPGMDGPTIQRATEAALSGGVRVRDALTAVESISKAGGRAVVMTYWNPVLRYGVDAFARDLAAAGGHGLITPDLIPDEAQQWLAASDEHGLDRIFLVAPSSTPERLANTVAASRGFVYAASTMGVTGARDAVSNAAPDLVARVKAVSDIPVGVGLGVRSREQAAEIGRYADGVIVGSALVSALGDGLPSLRSLTEELAAGVRQRNSP.

Residues Glu-56 and Asp-67 each act as proton acceptor in the active site.

The protein belongs to the TrpA family. In terms of assembly, tetramer of two alpha and two beta chains.

The catalysed reaction is (1S,2R)-1-C-(indol-3-yl)glycerol 3-phosphate + L-serine = D-glyceraldehyde 3-phosphate + L-tryptophan + H2O. It functions in the pathway amino-acid biosynthesis; L-tryptophan biosynthesis; L-tryptophan from chorismate: step 5/5. The alpha subunit is responsible for the aldol cleavage of indoleglycerol phosphate to indole and glyceraldehyde 3-phosphate. In Mycobacterium marinum (strain ATCC BAA-535 / M), this protein is Tryptophan synthase alpha chain.